The following is a 133-amino-acid chain: MGLENLKPAKGSVKKIKRVGRGQGSGMGKTATRGGKGQTARTGYKAKRGFEGGQQPLQRRLPKIGFRTKDSHIYSINVEKNEAIKSLEEITFSSLRALHHFPLYIEGVKLIGKDAKNLASKIKDERIKTSGQK.

Residues 1-64 (MGLENLKPAK…QPLQRRLPKI (64 aa)) form a disordered region.

Belongs to the universal ribosomal protein uL15 family. In terms of assembly, part of the 50S ribosomal subunit.

In terms of biological role, binds to the 23S rRNA. The chain is Large ribosomal subunit protein uL15 from Helicobacter pylori (strain J99 / ATCC 700824) (Campylobacter pylori J99).